A 128-amino-acid polypeptide reads, in one-letter code: Small ribosomal subunit protein uS11 (128 aa).

It belongs to the universal ribosomal protein uS11 family. As to quaternary structure, part of the 30S ribosomal subunit. Interacts with proteins S7 and S18. Binds to IF-3.

Located on the platform of the 30S subunit, it bridges several disparate RNA helices of the 16S rRNA. Forms part of the Shine-Dalgarno cleft in the 70S ribosome. This is Small ribosomal subunit protein uS11 from Aster yellows witches'-broom phytoplasma (strain AYWB).